A 140-amino-acid polypeptide reads, in one-letter code: Acyl-coenzyme A thioesterase 13 (140 aa).

Position 1 is an N-acetylmethionine (methionine 1). Lysine 27, lysine 37, and lysine 43 each carry N6-acetyllysine. Glutamate 46 is a CoA binding site. Residues asparagine 50 and glycine 81 each contribute to the substrate site. Residues serine 83, 90–95, and 108–113 contribute to the CoA site; these read YMSPAK and KQGKTL. 2 positions are modified to N6-acetyllysine: lysine 108 and lysine 127. Histidine 137 serves as a coordination point for CoA.

It belongs to the thioesterase PaaI family. Homotetramer. Interacts with PCTP. As to expression, highly expressed in the kidney and moderately in the heart, liver, brain, small and large intestine. Also expressed in brown adipose tissue.

It is found in the cytoplasm. The protein localises to the cytosol. The protein resides in the mitochondrion. Its subcellular location is the nucleus. It localises to the cytoskeleton. It is found in the spindle. It carries out the reaction a fatty acyl-CoA + H2O = a fatty acid + CoA + H(+). The catalysed reaction is decanoyl-CoA + H2O = decanoate + CoA + H(+). The enzyme catalyses octanoyl-CoA + H2O = octanoate + CoA + H(+). It catalyses the reaction butanoyl-CoA + H2O = butanoate + CoA + H(+). It carries out the reaction hexanoyl-CoA + H2O = hexanoate + CoA + H(+). The catalysed reaction is tetradecanoyl-CoA + H2O = tetradecanoate + CoA + H(+). The enzyme catalyses hexadecanoyl-CoA + H2O = hexadecanoate + CoA + H(+). It catalyses the reaction dodecanoyl-CoA + H2O = dodecanoate + CoA + H(+). It carries out the reaction (9Z)-octadecenoyl-CoA + H2O = (9Z)-octadecenoate + CoA + H(+). Functionally, catalyzes the hydrolysis of acyl-CoAs into free fatty acids and coenzyme A (CoASH), regulating their respective intracellular levels. Has acyl-CoA thioesterase activity towards medium (C12) and long-chain (C18) fatty acyl-CoA substrates. Can also hydrolyze 3-hydroxyphenylacetyl-CoA and 3,4-dihydroxyphenylacetyl-CoA (in vitro). May play a role in controlling adaptive thermogenesis. In Mus musculus (Mouse), this protein is Acyl-coenzyme A thioesterase 13.